Here is a 185-residue protein sequence, read N- to C-terminus: Ribosome-recycling factor (185 aa).

This sequence belongs to the RRF family.

It is found in the cytoplasm. Its function is as follows. Responsible for the release of ribosomes from messenger RNA at the termination of protein biosynthesis. May increase the efficiency of translation by recycling ribosomes from one round of translation to another. In Campylobacter fetus subsp. fetus (strain 82-40), this protein is Ribosome-recycling factor.